The sequence spans 408 residues: Dihydrolipoyllysine-residue acetyltransferase component of pyruvate dehydrogenase complex (408 aa).

The region spanning 2 to 78 (PIKILMPALS…PVNSLIAVLS (77 aa)) is the Lipoyl-binding domain. Lysine 43 carries the N6-lipoyllysine modification. The Peripheral subunit-binding (PSBD) domain occupies 128–165 (FASPLAKRLAKIGDIRLENVQGSGPHGRIVKQDILSYD). The active site involves histidine 381.

It belongs to the 2-oxoacid dehydrogenase family. As to quaternary structure, forms a 24-polypeptide structural core with octahedral symmetry. It depends on (R)-lipoate as a cofactor.

The enzyme catalyses N(6)-[(R)-dihydrolipoyl]-L-lysyl-[protein] + acetyl-CoA = N(6)-[(R)-S(8)-acetyldihydrolipoyl]-L-lysyl-[protein] + CoA. Functionally, the pyruvate dehydrogenase complex catalyzes the overall conversion of pyruvate to acetyl-CoA and CO(2). It contains multiple copies of three enzymatic components: pyruvate dehydrogenase (E1), dihydrolipoamide acetyltransferase (E2) and lipoamide dehydrogenase (E3). The protein is Dihydrolipoyllysine-residue acetyltransferase component of pyruvate dehydrogenase complex (pdhC) of Rickettsia prowazekii (strain Madrid E).